A 118-amino-acid chain; its full sequence is Large ribosomal subunit protein bL20 (118 aa).

It belongs to the bacterial ribosomal protein bL20 family.

Functionally, binds directly to 23S ribosomal RNA and is necessary for the in vitro assembly process of the 50S ribosomal subunit. It is not involved in the protein synthesizing functions of that subunit. This Pseudomonas fluorescens (strain SBW25) protein is Large ribosomal subunit protein bL20.